The chain runs to 523 residues: Tubulin-specific chaperone E (523 aa).

Residues 31–75 enclose the CAP-Gly domain; that stretch reads GEVSGHMGSWLGIEWDDGLRGKHNGIVDGKRYFQTQTPTGGSFIR. LRR repeat units follow at residues 155 to 180, 181 to 204, 209 to 232, 235 to 258, 260 to 284, 285 to 310, and 315 to 337; these read LTHLTTLNVSHTLIWNWEIVASIAQQ, LPSLTNLNLSSNRLVLPTSSQITE, FRQLKRINLRSCGFSDWKDVMHTA, WPNILSLGLQENSLGQLAEVDRTK, FKQLHELDLHRTNIMDFDQVTKLGN, LTTLRLLNIMENGIEEIKLPDCDSQE, and FVSLEQLNLLHNPIWNEADAFNE.

Belongs to the TBCE family.

Its subcellular location is the cytoplasm. Tubulin-folding protein which is required for the development of the neuronal microtubule network. Essential for the development and function of neuromuscular synapses. Likely to promote microtubule formation by acting in the negative regulation of the microtubule-severing protein spas. In Drosophila melanogaster (Fruit fly), this protein is Tubulin-specific chaperone E.